A 266-amino-acid polypeptide reads, in one-letter code: Large ribosomal subunit protein uL2m (266 aa).

It belongs to the universal ribosomal protein uL2 family.

It is found in the mitochondrion. The protein is Large ribosomal subunit protein uL2m (mrpl2) of Dictyostelium citrinum (Slime mold).